The chain runs to 351 residues: Glycerol-1-phosphate dehydrogenase [NAD(P)+] (351 aa).

Residues 97 to 101 and 119 to 122 each bind NAD(+); these read GKVID and TSPS. Position 124 (Asp124) interacts with substrate. NAD(+) is bound at residue Ser128. Asp171 lines the substrate pocket. Zn(2+)-binding residues include Asp171 and His251. Substrate is bound at residue His255. His267 provides a ligand contact to Zn(2+).

Belongs to the glycerol-1-phosphate dehydrogenase family. In terms of assembly, homodimer. Zn(2+) is required as a cofactor.

The protein localises to the cytoplasm. It catalyses the reaction sn-glycerol 1-phosphate + NAD(+) = dihydroxyacetone phosphate + NADH + H(+). The enzyme catalyses sn-glycerol 1-phosphate + NADP(+) = dihydroxyacetone phosphate + NADPH + H(+). It functions in the pathway membrane lipid metabolism; glycerophospholipid metabolism. In terms of biological role, catalyzes the NAD(P)H-dependent reduction of dihydroxyacetonephosphate (DHAP or glycerone phosphate) to glycerol 1-phosphate (G1P). The G1P thus generated is used as the glycerophosphate backbone of phospholipids in the cellular membranes of Archaea. The polypeptide is Glycerol-1-phosphate dehydrogenase [NAD(P)+] (Saccharolobus islandicus (strain Y.N.15.51 / Yellowstone #2) (Sulfolobus islandicus)).